A 169-amino-acid polypeptide reads, in one-letter code: Peptide methionine sulfoxide reductase MsrA (169 aa).

Residue C10 is part of the active site.

This sequence belongs to the MsrA Met sulfoxide reductase family.

The enzyme catalyses L-methionyl-[protein] + [thioredoxin]-disulfide + H2O = L-methionyl-(S)-S-oxide-[protein] + [thioredoxin]-dithiol. The catalysed reaction is [thioredoxin]-disulfide + L-methionine + H2O = L-methionine (S)-S-oxide + [thioredoxin]-dithiol. Its function is as follows. Has an important function as a repair enzyme for proteins that have been inactivated by oxidation. Catalyzes the reversible oxidation-reduction of methionine sulfoxide in proteins to methionine. This Streptococcus agalactiae serotype Ia (strain ATCC 27591 / A909 / CDC SS700) protein is Peptide methionine sulfoxide reductase MsrA.